A 196-amino-acid chain; its full sequence is Peptidyl-tRNA hydrolase (196 aa).

Y18 is a tRNA binding site. The active-site Proton acceptor is the H23. TRNA is bound by residues F69, N71, and N117.

This sequence belongs to the PTH family. Monomer.

It is found in the cytoplasm. The catalysed reaction is an N-acyl-L-alpha-aminoacyl-tRNA + H2O = an N-acyl-L-amino acid + a tRNA + H(+). In terms of biological role, hydrolyzes ribosome-free peptidyl-tRNAs (with 1 or more amino acids incorporated), which drop off the ribosome during protein synthesis, or as a result of ribosome stalling. Functionally, catalyzes the release of premature peptidyl moieties from peptidyl-tRNA molecules trapped in stalled 50S ribosomal subunits, and thus maintains levels of free tRNAs and 50S ribosomes. This is Peptidyl-tRNA hydrolase from Aliivibrio salmonicida (strain LFI1238) (Vibrio salmonicida (strain LFI1238)).